The following is a 199-amino-acid chain: Peroxiredoxin-1 (199 aa).

In terms of domain architecture, Thioredoxin spans 6–165 (AFIGKPAPDF…TLRLVQAFQF (160 aa)). C52 (cysteine sulfenic acid (-SOH) intermediate) is an active-site residue.

It belongs to the peroxiredoxin family. AhpC/Prx1 subfamily. Homodimer; disulfide-linked, upon oxidation. 5 homodimers assemble to form a ring-like decamer. Interacts with GDPD5; forms a mixed-disulfide with GDPD5. Interacts with SESN1 and SESN2. Post-translationally, the enzyme can be inactivated by further oxidation of the cysteine sulfenic acid (C(P)-SOH) to sulphinic acid (C(P)-SO2H) instead of its condensation to a disulfide bond. It can be reactivated by forming a transient disulfide bond with sulfiredoxin SRXN1, which reduces the cysteine sulfinic acid in an ATP- and Mg-dependent manner.

Its subcellular location is the cytoplasm. The catalysed reaction is a hydroperoxide + [thioredoxin]-dithiol = an alcohol + [thioredoxin]-disulfide + H2O. In terms of biological role, thiol-specific peroxidase that catalyzes the reduction of hydrogen peroxide and organic hydroperoxides to water and alcohols, respectively. Plays a role in cell protection against oxidative stress by detoxifying peroxides and as sensor of hydrogen peroxide-mediated signaling events. Might participate in the signaling cascades of growth factors and tumor necrosis factor-alpha by regulating the intracellular concentrations of H(2)O(2). Reduces an intramolecular disulfide bond in GDPD5 that gates the ability to GDPD5 to drive postmitotic motor neuron differentiation. The chain is Peroxiredoxin-1 (PRDX1) from Gallus gallus (Chicken).